A 290-amino-acid polypeptide reads, in one-letter code: TIMELESS-interacting protein (290 aa).

Residues 1–59 are disordered; the sequence is MLEPQENGLTDLPDYEHIEDETFPPFPPPASPGREDGEGAEPEEESGRGAPVPVPPKRT. Residues 67 to 143 are interaction with TIMELESS; that stretch reads LNAERLISER…KEVQTCLKRI (77 aa). Phosphoserine is present on residues S194 and S222. The span at 221-242 shows a compositional bias: polar residues; sequence NSQSLGNDLSVNTPSTQTSEAG. A disordered region spans residues 221 to 290; it reads NSQSLGNDLS…VEETQLDQSF (70 aa). 2 positions are modified to phosphothreonine: T233 and T244.

The protein belongs to the CSM3 family. Interacts with TIMELESS (via N-terminus), which impairs TIMELESS self-association. Associates with the MCM2-7 complex. Interacts with RPA2, PRDX2.

Its subcellular location is the cytoplasm. It is found in the nucleus. Its function is as follows. Plays an important role in the control of DNA replication and the maintenance of replication fork stability. Important for cell survival after DNA damage or replication stress. May be specifically required for the ATR-CHEK1 pathway in the replication checkpoint induced by hydroxyurea or ultraviolet light. Forms a complex with TIMELESS and this complex regulates DNA replication processes under both normal and stress conditions, stabilizes replication forks and influences both CHEK1 phosphorylation and the intra-S phase checkpoint in response to genotoxic stress. In Bos taurus (Bovine), this protein is TIMELESS-interacting protein (TIPIN).